A 264-amino-acid chain; its full sequence is 2-dehydro-3-deoxy-D-gluconate 5-dehydrogenase (264 aa).

Residue 14 to 38 (LVTGSTHGLGMAMAKGLGLAGATIV) coordinates NAD(+). Serine 147 is a binding site for substrate. Tyrosine 160 acts as the Proton acceptor in catalysis.

The protein belongs to the short-chain dehydrogenases/reductases (SDR) family. In terms of assembly, homotetramer.

It is found in the cytoplasm. It carries out the reaction 2-dehydro-3-deoxy-D-gluconate + NAD(+) = 3-deoxy-D-glycero-2,5-hexodiulosonate + NADH + H(+). Its function is as follows. 2-dehydro-3-deoxy-D-gluconate 5-dehydrogenase involved in ulvan degradation. Ulvan is the main polysaccharide component of the Ulvales (green seaweed) cell wall. It is composed of disaccharide building blocks comprising 3-sulfated rhamnose (Rha3S) linked to D-glucuronic acid (GlcA), L-iduronic acid (IduA), or D-xylose (Xyl). Catalyzes the reversible reduction of 2,5-diketo-3-deoxygluconate (DKII or 4,6-dihydroxy-2,5-dioxohexanoate) into 2-keto-3-deoxygluconate (KDG or 2-dehydro-3-deoxygluconate) with a concomitant oxidation of NADH. The polypeptide is 2-dehydro-3-deoxy-D-gluconate 5-dehydrogenase (kduD) (Formosa agariphila (strain DSM 15362 / KCTC 12365 / LMG 23005 / KMM 3901 / M-2Alg 35-1)).